We begin with the raw amino-acid sequence, 511 residues long: Ribose import ATP-binding protein RbsA 3 (511 aa).

ABC transporter domains are found at residues 21–257 (LEMR…VGRD) and 256–511 (RDVE…TGNA). ATP is bound at residue 53–60 (GENGAGKS).

The protein belongs to the ABC transporter superfamily. Ribose importer (TC 3.A.1.2.1) family. In terms of assembly, the complex is composed of an ATP-binding protein (RbsA), two transmembrane proteins (RbsC) and a solute-binding protein (RbsB).

It is found in the cell inner membrane. The enzyme catalyses D-ribose(out) + ATP + H2O = D-ribose(in) + ADP + phosphate + H(+). In terms of biological role, part of the ABC transporter complex RbsABC involved in ribose import. Responsible for energy coupling to the transport system. This chain is Ribose import ATP-binding protein RbsA 3, found in Rhizobium etli (strain ATCC 51251 / DSM 11541 / JCM 21823 / NBRC 15573 / CFN 42).